The sequence spans 466 residues: MEAANEVVNLFASQATTPSSLDAVTTLETVSTPTFIFPEVSDSQILQLMPATLYSGMNWLRDHLDGFSLLALSGCIFVSVLYLVHIIAFFYSIYRLHHKVEPDPTLPGVSVIKPIVGTDKNLYQNLESFFTSQYHSFELLFCFHSEEDEAIEVVRSLIKKHPNIEAKILFEGEPVGMNPKVNNMMPAYRAARYPLVLISDSAIFMRPDGILDMATTMMSHEKMASVTQIPYCKDRQGFHAAFEQIFFGTSHARLYLVGNFLGVVCSSGMSSMMKKSALDECGGMEKFGEYLAEDYFFAKALTSRGCKAAISTHPALQNSASVTVLSFFNRIGRWIKLRIAMMPHLMVVEPLQDCVTSGLIMAFGLNYLGGYSVYKTFGLHLFYWIVMDFSLMTSMQNGKFNFTPFLFVFIWLFREFTSPFIFIKAVLAPTIVWRNNKFKLSWGGRIRTSKNSQKVPEAVSLSKGAV.

A helical membrane pass occupies residues 70–90 (LALSGCIFVSVLYLVHIIAFF). A short sequence motif (D1) is located at residue aspartate 148. Aspartate 200 is a short sequence motif (D2). Residue aspartate 294 is a short sequence motif, D3. The active-site Proton acceptor is aspartate 294. The (Q/R)XXRW signature appears at 330–334 (RIGRW). Transmembrane regions (helical) follow at residues 354–374 (CVTSGLIMAFGLNYLGGYSVY) and 403–423 (TPFLFVFIWLFREFTSPFIFI).

Belongs to the glycosyltransferase 2 family. Expressed in excretory canals, pharyngeal intestinal valve, intestine and intestinal rectal valve.

Its subcellular location is the membrane. The catalysed reaction is an N-acylsphing-4-enine + UDP-alpha-D-glucose = a beta-D-glucosyl-(1&lt;-&gt;1')-N-acylsphing-4-enine + UDP + H(+). The enzyme catalyses an N-acyl-15-methylhexadecasphing-4-enine + UDP-alpha-D-glucose = an N-acyl-1-beta-D-glucosyl-15-methylhexadecasphing-4-enine + UDP + H(+). The protein operates within lipid metabolism; sphingolipid metabolism. In terms of biological role, catalyzes the first glycosylation step in glycosphingolipid biosynthesis, the transfer of glucose to ceramide to produce glucosylceramides (GlcCer). GlcCer are known to contribute to the physical properties and physiological functions of membranes and may regulate signal transduction. Only branched-chain sphingoid bases like 15-methylhexadecasphing-4-enine are used for generating complex sphingolipids in Caenorhabditis elegans. Together with cgt-3, plays a role in the trafficking of proteins such as mig-14 to the cell membrane in intestinal cells. This is Ceramide glucosyltransferase 1 from Caenorhabditis elegans.